The primary structure comprises 169 residues: Ribosome maturation factor RimM (169 aa).

A PRC barrel domain is found at 94–166 (EEGFYDHELE…TATITPPDGL (73 aa)).

It belongs to the RimM family. In terms of assembly, binds ribosomal protein uS19.

The protein resides in the cytoplasm. An accessory protein needed during the final step in the assembly of 30S ribosomal subunit, possibly for assembly of the head region. Essential for efficient processing of 16S rRNA. May be needed both before and after RbfA during the maturation of 16S rRNA. It has affinity for free ribosomal 30S subunits but not for 70S ribosomes. This Corynebacterium efficiens (strain DSM 44549 / YS-314 / AJ 12310 / JCM 11189 / NBRC 100395) protein is Ribosome maturation factor RimM.